The chain runs to 369 residues: Mitogen-activated protein kinase 5 (369 aa).

The Protein kinase domain occupies Gln36–Leu322. ATP is bound by residues Ile42–Val50 and Lys65. Asp162 (proton acceptor) is an active-site residue. A Phosphothreonine modification is found at Thr194. The TXY motif lies at Thr194–Tyr196. Position 196 is a phosphotyrosine (Tyr196).

Belongs to the protein kinase superfamily. CMGC Ser/Thr protein kinase family. MAP kinase subfamily. In terms of assembly, interacts with MKK1. In terms of processing, dually phosphorylated on Thr-194 and Tyr-196, which activates the enzyme.

The enzyme catalyses L-seryl-[protein] + ATP = O-phospho-L-seryl-[protein] + ADP + H(+). It catalyses the reaction L-threonyl-[protein] + ATP = O-phospho-L-threonyl-[protein] + ADP + H(+). With respect to regulation, activated by threonine and tyrosine phosphorylation. Involved in disease resistance and abiotic stress tolerance signaling pathways. The polypeptide is Mitogen-activated protein kinase 5 (MPK5) (Oryza sativa subsp. indica (Rice)).